Here is a 690-residue protein sequence, read N- to C-terminus: UvrABC system protein C (690 aa).

The tract at residues 1–60 (MTTDSSDPAKPAGPGQPPGSGADTRPGGLATGQDVDPATIETDEDDEARLPDVPDEPTDA) is disordered. A compositionally biased stretch (acidic residues) spans 41-58 (ETDEDDEARLPDVPDEPT). In terms of domain architecture, GIY-YIG spans 82–160 (TSPGVYRMMN…IKQLRPRFNV (79 aa)). Residues 270–305 (RAVKEELAREMEKASGDLAFERAALYRDRLAALSAI) form the UVR domain.

The protein belongs to the UvrC family. Interacts with UvrB in an incision complex.

The protein localises to the cytoplasm. Functionally, the UvrABC repair system catalyzes the recognition and processing of DNA lesions. UvrC both incises the 5' and 3' sides of the lesion. The N-terminal half is responsible for the 3' incision and the C-terminal half is responsible for the 5' incision. In Nitrobacter hamburgensis (strain DSM 10229 / NCIMB 13809 / X14), this protein is UvrABC system protein C.